The following is a 505-amino-acid chain: Folate transporter 1 (505 aa).

4 helical membrane-spanning segments follow: residues 58–78, 89–109, 122–142, and 146–166; these read SLIA…IYLL, LSIV…WAVI, YYLL…GLIT, and LFIT…CNVI. N-linked (GlcNAc...) asparagine glycosylation is found at Asn177, Asn181, and Asn186. The next 2 helical transmembrane spans lie at 192–212 and 216–236; these read AFRK…LLLI and HIFL…FFII. Asn240 is a glycosylation site (N-linked (GlcNAc...) asparagine). The next 5 helical transmembrane spans lie at 266–286, 300–320, 326–346, 352–372, and 405–425; these read IIFI…FFYI, MAMF…LFFT, KLLL…LVVI, FLFI…EFIA, and FASI…NITS. An N-linked (GlcNAc...) asparagine glycan is attached at Asn427. Residues 431–451 form a helical membrane-spanning segment; the sequence is LPYMIIICCLTNIIPIFFLYI. Residue Asn454 is glycosylated (N-linked (GlcNAc...) asparagine).

This sequence belongs to the major facilitator superfamily. Folate-biopterin transporter (TC 2.A.71) family.

Its subcellular location is the cell membrane. The catalysed reaction is folate(in) + H(+)(in) = folate(out) + H(+)(out). With respect to regulation, transport of folates is inhibited by probenecid and methotrexate. In terms of biological role, folate transporter with broad substrate specificity. Transports folic acid, folinic acid, pteroic acid, dihydropteroic acid, the folate precursor p-amino benzoic acid (pABA) and the human folate catabolite pABA monoglutamate. This Plasmodium falciparum (isolate 3D7) protein is Folate transporter 1.